Consider the following 434-residue polypeptide: Adenylosuccinate synthetase (434 aa).

GTP is bound by residues G14–K20 and G42–E44. The Proton acceptor role is filled by D15. D15 and G42 together coordinate Mg(2+). Residues D15–K18, N40–H43, T133, R147, N229, T244, and R308 each bind IMP. Catalysis depends on H43, which acts as the Proton donor. V304–R310 is a substrate binding site. GTP contacts are provided by residues R310, K336 to D338, and G422 to G424.

Belongs to the adenylosuccinate synthetase family. Homodimer. The cofactor is Mg(2+).

It is found in the cytoplasm. It catalyses the reaction IMP + L-aspartate + GTP = N(6)-(1,2-dicarboxyethyl)-AMP + GDP + phosphate + 2 H(+). The protein operates within purine metabolism; AMP biosynthesis via de novo pathway; AMP from IMP: step 1/2. Its function is as follows. Plays an important role in the salvage pathway for purine nucleotide biosynthesis. Catalyzes the first committed step in the biosynthesis of AMP from IMP. The polypeptide is Adenylosuccinate synthetase (Theileria parva (East coast fever infection agent)).